Consider the following 484-residue polypeptide: MAPWLQLLSLLGLLPGAVAAPAQPRAASFQAWGPPSPELLAPTRFALEMFNRGRAAGTRAVLGLVRGRVRRAGQGSLYSLEATLEEPPCNDPMVCRLPVSKKTLLCSFQVLDELGRHVLLRKDCGPVDTKVPGAGEPKSAFTQGSAMISSLSQNHPDNRNETFSSVISLLNEDPLSQDLPVKMASIFKNFVITYNRTYESKEEARWRLSVFVNNMVRAQKIQALDRGTAQYGVTKFSDLTEEEFRTIYLNTLLRKEPGNKMKQAKSVGDLAPPEWDWRSKGAVTKVKDQGMCGSCWAFSVTGNVEGQWFLNQGTLLSLSEQELLDCDKMDKACMGGLPSNAYSAIKNLGGLETEDDYSYQGHMQSCNFSAEKAKVYINDSVELSQNEQKLAAWLAKRGPISVAINAFGMQFYRHGISRPLRPLCSPWLIDHAVLLVGYGNRSDVPFWAIKNSWGTDWGEKGYYYLHRGSGACGVNTMASSAVVD.

Positions Met1–Ala19 are cleaved as a signal peptide. Positions Ala20–Leu270 are cleaved as a propeptide — activation peptide. Residues Asn160 and Asn195 are each glycosylated (N-linked (GlcNAc...) asparagine). 2 disulfides stabilise this stretch: Cys292–Cys333 and Cys326–Cys366. Residue Cys295 is part of the active site. N-linked (GlcNAc...) asparagine glycans are attached at residues Asn367 and Asn378. Cys424 and Cys472 are oxidised to a cystine. His431 is an active-site residue. Asn440 is a glycosylation site (N-linked (GlcNAc...) asparagine). The active site involves Asn451.

Belongs to the peptidase C1 family. In terms of tissue distribution, high expression levels in heart, skeletal muscle, brain, testis and ovary; moderate levels in prostate, placenta, liver and colon; and no detectable expression in peripheral leukocytes and thymus.

The protein localises to the lysosome. It catalyses the reaction The recombinant enzyme cleaves synthetic substrates with Phe and Leu (better than Val) in P2, with high specificity constant (kcat/Km) comparable to that of cathepsin L.. In terms of biological role, thiol protease which is believed to participate in intracellular degradation and turnover of proteins. Has also been implicated in tumor invasion and metastasis. The sequence is that of Cathepsin F (CTSF) from Homo sapiens (Human).